The chain runs to 62 residues: 2-hydroxymuconate tautomerase (62 aa).

Catalysis depends on Pro-2, which acts as the Proton acceptor; via imino nitrogen. 9–12 serves as a coordination point for substrate; it reads LEGR.

The protein belongs to the 4-oxalocrotonate tautomerase family. As to quaternary structure, homohexamer.

It carries out the reaction (2Z,4E)-2-hydroxyhexa-2,4-dienedioate = (3E)-2-oxohex-3-enedioate. Its function is as follows. Catalyzes both 1,3- and 1,5-keto-enol tautomerization of the diacid 2-hydroxymuconate (2-hydroxy-2,4-hexadienedioate) to produce 2-oxo-4-hexenedioate. This reaction is highly stereoselective and produces a mixture of stereoisomers, where the (3S)-isomer of 2-oxo-4-hexenedioate predominates. Also catalyzes the tautomerization of 2-hydroxymuconate to 2-oxo-3-hexenedioate, however this reaction is slower and occurs after the tautomerization of 2-hydroxymuconate to 2-oxo-4-hexenedioate. Using 2-hydroxy-2,4-pentadienoate, phenylenolpyruvate, (p-hydroxyphenyl)-enolpyruvate and 2-hydroxy-2,4-heptadiene-1,7-dioate, YwhB is a highly efficient 1,3-keto-enol tautomerase, but clearly not a 1,5-keto-enol tautomerase. Tautomerization of the two monoacids 2-hydroxy-2,4-pentadienoate and phenylenolpyruvate produces a mixture of stereoisomers, where the (3R)-isomers predominate. In Bacillus subtilis (strain 168), this protein is 2-hydroxymuconate tautomerase (ywhB).